Consider the following 67-residue polypeptide: Theromin (67 aa).

Residues 2-27 enclose the Antistasin-like domain; sequence CENTECPRACPGEYEFDEDGCNTCVC.

As to quaternary structure, homodimer. In terms of processing, eight disulfide bonds are present.

It localises to the secreted. In terms of biological role, potent thrombin-specific inhibitor. In Theromyzon tessulatum (Duck leech), this protein is Theromin.